Consider the following 355-residue polypeptide: Elongation factor Ts (355 aa).

The involved in Mg(2+) ion dislocation from EF-Tu stretch occupies residues 82–85; it reads TDFV.

The protein belongs to the EF-Ts family.

Its subcellular location is the cytoplasm. Functionally, associates with the EF-Tu.GDP complex and induces the exchange of GDP to GTP. It remains bound to the aminoacyl-tRNA.EF-Tu.GTP complex up to the GTP hydrolysis stage on the ribosome. The polypeptide is Elongation factor Ts (Helicobacter pylori (strain P12)).